Reading from the N-terminus, the 184-residue chain is ATP synthase subunit b, chloroplastic (184 aa).

The chain crosses the membrane as a helical span at residues 27–49 (LATNLINLSVVIGVLIFFGKGVL).

This sequence belongs to the ATPase B chain family. F-type ATPases have 2 components, F(1) - the catalytic core - and F(0) - the membrane proton channel. F(1) has five subunits: alpha(3), beta(3), gamma(1), delta(1), epsilon(1). F(0) has four main subunits: a(1), b(1), b'(1) and c(10-14). The alpha and beta chains form an alternating ring which encloses part of the gamma chain. F(1) is attached to F(0) by a central stalk formed by the gamma and epsilon chains, while a peripheral stalk is formed by the delta, b and b' chains.

It is found in the plastid. Its subcellular location is the chloroplast thylakoid membrane. Functionally, f(1)F(0) ATP synthase produces ATP from ADP in the presence of a proton or sodium gradient. F-type ATPases consist of two structural domains, F(1) containing the extramembraneous catalytic core and F(0) containing the membrane proton channel, linked together by a central stalk and a peripheral stalk. During catalysis, ATP synthesis in the catalytic domain of F(1) is coupled via a rotary mechanism of the central stalk subunits to proton translocation. Its function is as follows. Component of the F(0) channel, it forms part of the peripheral stalk, linking F(1) to F(0). This Jasminum nudiflorum (Winter jasmine) protein is ATP synthase subunit b, chloroplastic.